The chain runs to 207 residues: Protein phosphatase inhibitor 2 (207 aa).

Disordered stretches follow at residues 1-44, 65-97, and 110-146; these read MAAS…SKKS, LMKI…ALTP, and ESLE…EMKR. Alanine 2 is modified (N-acetylalanine). Residues 12 to 17 form a required for binding PPP1CC region; the sequence is KGILKN. Residues 19 to 28 are compositionally biased toward low complexity; it reads SSTTSSVVST. Residues 35–44 show a composition bias toward basic and acidic residues; that stretch reads SVDEELSKKS. The required for binding PPP1CC stretch occupies residues 43-55; that stretch reads KSQKWDEMSILAT. Position 44 is a phosphoserine; by ATM (serine 44). A Phosphothreonine; by GSK3 modification is found at threonine 73. Positions 80–91 are enriched in acidic residues; the sequence is ADDEDALSDSET. A phosphoserine mark is found at serine 87 and serine 89. Phosphothreonine is present on residues threonine 92 and threonine 96. Positions 112 to 122 are enriched in basic and acidic residues; the sequence is LEPKYRVREQE. Phosphoserine is present on residues serine 123, serine 124, serine 129, and serine 132. Acidic residues predominate over residues 123–132; that stretch reads SSGDEDSDLS. A compositionally biased stretch (basic and acidic residues) spans 133–145; that stretch reads PEEREKKRQFEMK. The interval 149–152 is required for binding PPP1CC catalytic center, displacing metal ions and inhibition of PPP1CC catalytic activity; sequence HYNE. Residues 165–207 are disordered; that stretch reads KDLNDEEEDEEMSETAAGESMNMEESSQGSATSDQLQNKSQSS. Residues 168–177 show a composition bias toward acidic residues; the sequence is NDEEEDEEMS. Over residues 187-207 the composition is skewed to polar residues; sequence MEESSQGSATSDQLQNKSQSS.

This sequence belongs to the protein phosphatase inhibitor 2 family. Heterodimer with PP1. Phosphorylation on Ser-44 by ATM activates PP1 by dissociating the PP1-PPP1R2 complex. Phosphorylation on Thr-73 by GSK3 activates PP1 by dissociating the PP1-PPP1R2 complex.

In terms of biological role, inhibitor of protein-phosphatase 1. This chain is Protein phosphatase inhibitor 2 (PPP1R2), found in Bos taurus (Bovine).